The sequence spans 138 residues: Acidic phospholipase A2 Cvv-E6e (138 aa).

An N-terminal signal peptide occupies residues 1-16; it reads MRTLWILAVLLLGVEG. Intrachain disulfides connect cysteine 42/cysteine 131, cysteine 44/cysteine 60, cysteine 59/cysteine 111, cysteine 65/cysteine 138, cysteine 66/cysteine 104, cysteine 73/cysteine 97, and cysteine 91/cysteine 102. Positions 43, 45, and 47 each coordinate Ca(2+). Residue histidine 63 is part of the active site. A Ca(2+)-binding site is contributed by aspartate 64. Aspartate 105 is a catalytic residue.

Ca(2+) is required as a cofactor. In terms of tissue distribution, expressed by the venom gland.

It is found in the secreted. The catalysed reaction is a 1,2-diacyl-sn-glycero-3-phosphocholine + H2O = a 1-acyl-sn-glycero-3-phosphocholine + a fatty acid + H(+). Functionally, snake venom phospholipase A2 (PLA2) that significantly inhibits ADP-induced platelet aggregation in platelet-rich plasma of human, rabbit and guinea pig. PLA2 catalyzes the calcium-dependent hydrolysis of the 2-acyl groups in 3-sn-phosphoglycerides. The polypeptide is Acidic phospholipase A2 Cvv-E6e (Crotalus viridis viridis (Prairie rattlesnake)).